The chain runs to 195 residues: Probable WRKY transcription factor 56 (195 aa).

The span at 1 to 10 shows a compositional bias: polar residues; sequence MEGVDNTNPM. Disordered stretches follow at residues 1–20 and 70–93; these read MEGVDNTNPMLTLEEGENNN and EMGGLVSNNSNNSDHNKNCNKGKG. Residues 108 to 173 constitute a DNA-binding region (WRKY); it reads SDDDVLDDGY…YEGVHNHPCE (66 aa).

Belongs to the WRKY group II-c family.

Its subcellular location is the nucleus. Transcription factor. Interacts specifically with the W box (5'-(T)TGAC[CT]-3'), a frequently occurring elicitor-responsive cis-acting element. The chain is Probable WRKY transcription factor 56 (WRKY56) from Arabidopsis thaliana (Mouse-ear cress).